A 60-amino-acid polypeptide reads, in one-letter code: Sec-independent protein translocase protein TatA (60 aa).

Residues 1–21 (MTPAGPAQLLIVALVVIVLFG) form a helical membrane-spanning segment.

Belongs to the TatA/E family. In terms of assembly, the Tat system comprises two distinct complexes: a TatABC complex, containing multiple copies of TatA, TatB and TatC subunits, and a separate TatA complex, containing only TatA subunits. Substrates initially bind to the TatABC complex, which probably triggers association of the separate TatA complex to form the active translocon.

The protein resides in the cell membrane. Functionally, part of the twin-arginine translocation (Tat) system that transports large folded proteins containing a characteristic twin-arginine motif in their signal peptide across membranes. TatA could form the protein-conducting channel of the Tat system. This is Sec-independent protein translocase protein TatA from Corynebacterium glutamicum (strain R).